The sequence spans 101 residues: uncharacterized protein (101 aa).

Helical transmembrane passes span 10–30 and 67–87; these read VLAILVCQFIGPNVFIIIGSI and IILGFIGIYVFLFVLLFILSI.

It localises to the membrane. This is an uncharacterized protein from Acanthamoeba polyphaga (Amoeba).